A 119-amino-acid polypeptide reads, in one-letter code: Large ribosomal subunit protein uL22 (119 aa).

The protein belongs to the universal ribosomal protein uL22 family. As to quaternary structure, part of the 50S ribosomal subunit.

Functionally, this protein binds specifically to 23S rRNA; its binding is stimulated by other ribosomal proteins, e.g. L4, L17, and L20. It is important during the early stages of 50S assembly. It makes multiple contacts with different domains of the 23S rRNA in the assembled 50S subunit and ribosome. Its function is as follows. The globular domain of the protein is located near the polypeptide exit tunnel on the outside of the subunit, while an extended beta-hairpin is found that lines the wall of the exit tunnel in the center of the 70S ribosome. This is Large ribosomal subunit protein uL22 from Bifidobacterium animalis subsp. lactis (strain AD011).